We begin with the raw amino-acid sequence, 237 residues long: Ribonuclease 3 (237 aa).

One can recognise an RNase III domain in the interval 5 to 136 (VDELSARLGV…VIAALFLDQG (132 aa)). Position 49 (Glu49) interacts with Mg(2+). Asp53 is an active-site residue. Asp122 and Glu125 together coordinate Mg(2+). Glu125 is a catalytic residue. The DRBM domain occupies 163–232 (DYKSRLQARI…ARAALDALEG (70 aa)). The segment covering 185–208 (IDRSGPEHRPEFTVEVRAGEERLG) has biased composition (basic and acidic residues). Positions 185 to 237 (IDRSGPEHRPEFTVEVRAGEERLGTGKGPSKQAAEQAAARAALDALEGGTDGR) are disordered. The segment covering 216–231 (QAAEQAAARAALDALE) has biased composition (low complexity).

Belongs to the ribonuclease III family. In terms of assembly, homodimer. The cofactor is Mg(2+).

Its subcellular location is the cytoplasm. It catalyses the reaction Endonucleolytic cleavage to 5'-phosphomonoester.. In terms of biological role, digests double-stranded RNA. Involved in the processing of primary rRNA transcript to yield the immediate precursors to the large and small rRNAs (23S and 16S). Processes some mRNAs, and tRNAs when they are encoded in the rRNA operon. Processes pre-crRNA and tracrRNA of type II CRISPR loci if present in the organism. In Roseiflexus sp. (strain RS-1), this protein is Ribonuclease 3.